The following is a 177-amino-acid chain: Transcription antitermination protein NusB (177 aa).

Residues 1 to 35 (MTDSANPTPSARPPRQPRTGTTGTGARKAGSKSGR) are disordered. Residues 17–28 (PRTGTTGTGARK) show a composition bias toward low complexity.

This sequence belongs to the NusB family.

Involved in transcription antitermination. Required for transcription of ribosomal RNA (rRNA) genes. Binds specifically to the boxA antiterminator sequence of the ribosomal RNA (rrn) operons. This chain is Transcription antitermination protein NusB, found in Acidovorax ebreus (strain TPSY) (Diaphorobacter sp. (strain TPSY)).